Consider the following 336-residue polypeptide: Polyadenylate-binding protein-interacting protein 12 (336 aa).

Residues 14–47 are disordered; that stretch reads EAGGLISPSPPSSVTSQESGASSNNDHGGNGIHD. The segment covering 25–40 has biased composition (polar residues); the sequence is SSVTSQESGASSNNDH. Positions 75–85 match the PAM2-like motif; sequence KLNPMAKEFIP. A Bipartite nuclear localization signal motif is present at residues 122 to 134; that stretch reads RRKKSFGQQGKRR. RRM domains are found at residues 150 to 225 and 247 to 323; these read RTVY…PSKT and RTIY…PSKT.

Interacts with MPC. As to expression, expressed in roots, leaves, stems, flowers and siliques. Detected in flowers only in growing organs: gynoecium, petals, stamenal filaments, anther walls and ovules.

Its subcellular location is the nucleus. Functionally, binds nucleotic acids in vitro. This chain is Polyadenylate-binding protein-interacting protein 12 (CID12), found in Arabidopsis thaliana (Mouse-ear cress).